Here is a 171-residue protein sequence, read N- to C-terminus: Co-chaperone protein HscB (171 aa).

Positions 2 to 74 constitute a J domain; that stretch reads DYFTLFGLPA…LMRAEYLLSL (73 aa).

It belongs to the HscB family. As to quaternary structure, interacts with HscA and stimulates its ATPase activity. Interacts with IscU.

In terms of biological role, co-chaperone involved in the maturation of iron-sulfur cluster-containing proteins. Seems to help targeting proteins to be folded toward HscA. The polypeptide is Co-chaperone protein HscB (Escherichia coli (strain SE11)).